A 1545-amino-acid polypeptide reads, in one-letter code: ATP-binding cassette sub-family C member 9 (1545 aa).

At 1–30 (MSLSFCGNNISSYNIYHGVLQNPCFVDALN) the chain is on the extracellular side. A glycan (N-linked (GlcNAc...) asparagine) is linked at N9. Residues 31 to 51 (LVPHVFLLFITFPILFIGWGS) traverse the membrane as a helical segment. Residues 52-72 (QSSKVQIHHNTWLHFPGHNLR) are Cytoplasmic-facing. A helical transmembrane segment spans residues 73–93 (WILTFALLFVHVCEIAEGIVS). The Extracellular portion of the chain corresponds to 94–101 (DSQRASRH). Residues 102–122 (LHLFMPAVMGFVATTTSIVYY) traverse the membrane as a helical segment. Over 123–132 (HNIETSNFPK) the chain is Cytoplasmic. Residues 133 to 153 (LLLALFLYWVMAFITKTIKLV) traverse the membrane as a helical segment. Residues 154-167 (KYWQLGWGMSDLRF) lie on the Extracellular side of the membrane. Residues 168–188 (CITGVMVILNGLLMAVEINVI) traverse the membrane as a helical segment. Topologically, residues 189-301 (RVRRYVFFMN…AFGRPILLSS (113 aa)) are cytoplasmic. In terms of domain architecture, ABC transmembrane type-1 1 spans 297–594 (ILLSSTFRYL…LSTVVRFAVK (298 aa)). Residues 302-322 (TFRYLADLLGFAGPLCISGIV) traverse the membrane as a helical segment. Residues 323-347 (QRVNEPKNNTTRFSETLSSKEFLEN) lie on the Extracellular side of the membrane. N330 and N331 each carry an N-linked (GlcNAc...) asparagine glycan. A helical transmembrane segment spans residues 348–368 (AHVLAVLLFLALILQRTFLQA). Residues 369–420 (SYYVTIETGINLRGALLAMIYNKILRLSTSNLSMGEMTLGQINNLVAIETNQ) lie on the Cytoplasmic side of the membrane. Residues 421 to 441 (LMWFLFLCPNLWAMPVQIIMG) traverse the membrane as a helical segment. Topologically, residues 442-452 (VILLYNLLGSS) are extracellular. The chain crosses the membrane as a helical span at residues 453-473 (ALVGAAVIVLLAPIQYFIATK). The Cytoplasmic portion of the chain corresponds to 474-528 (LAEAQKSTLDYSTERLKKTNEILKGIKLLKLYAWEHIFCKSVEETRMKELSSLKT). A helical membrane pass occupies residues 529 to 549 (FALYTSLSIFMNAAIPIAAVL). Residues 550 to 568 (ATFVTHAYASGNNLKPAEA) lie on the Extracellular side of the membrane. Residues 569-589 (FASLSLFHILVTPLFLLSTVV) traverse the membrane as a helical segment. Over 590 to 986 (RFAVKAIISV…TCWWYLTSGG (397 aa)) the chain is Cytoplasmic. Residues 668 to 908 (IKVTNGYFSW…DVELYEHWKT (241 aa)) enclose the ABC transporter 1 domain. ATP is bound at residue 701-708 (GQVGCGKS). Positions 940–963 (REAKAQMEDEDEEEEEEEDEDDNM) are disordered. A compositionally biased stretch (acidic residues) spans 947-962 (EDEDEEEEEEEDEDDN). A helical membrane pass occupies residues 987–1007 (FFLLFLMIFSKLLKHSVIVAI). Residues 990–1270 (LFLMIFSKLL…VVRNLADLEV (281 aa)) form the ABC transmembrane type-1 2 domain. Residues 1008 to 1030 (DYWLATWTSEYSINDPGKADQTF) lie on the Extracellular side of the membrane. The helical transmembrane segment at 1031–1051 (YVAGFSILCGAGIFLCLVTSL) threads the bilayer. The Cytoplasmic portion of the chain corresponds to 1052–1123 (TVEWMGLTAA…TLLCLSAIGM (72 aa)). Residues 1124–1144 (ISYATPVFLIALAPLGVAFYF) form a helical membrane-spanning segment. The Extracellular segment spans residues 1145–1241 (IQKYFRVASK…IASISGSSNS (97 aa)). The helical transmembrane segment at 1242–1262 (GLVGLGLLYALTITNYLNWVV) threads the bilayer. Residues 1263 to 1545 (RNLADLEVQM…LFSTLVMTNK (283 aa)) are Cytoplasmic-facing. The 235-residue stretch at 1308 to 1542 (IKIHDLCVRY…KNGLFSTLVM (235 aa)) folds into the ABC transporter 2 domain. 1342-1349 (GRTGSGKS) contacts ATP.

The protein belongs to the ABC transporter superfamily. ABCC family. Conjugate transporter (TC 3.A.1.208) subfamily. Interacts with KCNJ11. Interacts with KCNJ8. In terms of tissue distribution, expressed at high levels in heart, skeletal muscle and ovary. Moderate levels are found in brain, tongue and pancreatic islets. Low levels are found in lung, testis and adrenal gland. Expressed at very low levels in stomach, colon, thyroid and pituitary.

The protein localises to the membrane. Subunit of ATP-sensitive potassium channels (KATP). Can form cardiac and smooth muscle-type KATP channels with KCNJ11. KCNJ11 forms the channel pore while ABCC9 is required for activation and regulation. Can form a sulfonylurea-sensitive but ATP-insensitive potassium channel with KCNJ8. This Rattus norvegicus (Rat) protein is ATP-binding cassette sub-family C member 9 (Abcc9).